Here is a 352-residue protein sequence, read N- to C-terminus: C-C chemokine receptor type 5 (352 aa).

Residues 1 to 30 are Extracellular-facing; it reads MDYQVSSPTYDIDYYTSEPCQKINVKQIAA. Y3 bears the Sulfotyrosine mark. Residues S6 and S7 are each glycosylated (O-linked (GalNAc...) serine). A sulfotyrosine mark is found at Y10, Y14, and Y15. 2 disulfides stabilise this stretch: C20-C269 and C101-C178. The helical transmembrane segment at 31-58 threads the bilayer; it reads RLLPPLYSLVFIFGFVGNILVVLILINC. Over 59-68 the chain is Cytoplasmic; that stretch reads KRLKSMTDIY. The helical transmembrane segment at 69-89 threads the bilayer; sequence LLNLAISDLLFLLTVPFWAHY. The Extracellular portion of the chain corresponds to 90-102; that stretch reads AAAQWDFGNTMCQ. The helical transmembrane segment at 103–124 threads the bilayer; it reads LLTGLYFIGFFSGIFFIILLTI. The Cytoplasmic portion of the chain corresponds to 125 to 141; sequence DRYLAIVHAVFALKART. The helical transmembrane segment at 142 to 166 threads the bilayer; the sequence is VTFGVVTSVITWVVAVFASLPGIIF. Residues 167-198 are Extracellular-facing; it reads TRSQREGLHYTCSSHFPYSQYQFWKNFQTLKI. Residues 199–218 form a helical membrane-spanning segment; that stretch reads VILGLVLPLLVMVICYSGIL. At 219 to 235 the chain is on the cytoplasmic side; that stretch reads KTLLRCRNEKKRHRAVR. The chain crosses the membrane as a helical span at residues 236 to 260; that stretch reads LIFTIMIVYFLFWAPYNIVLLLNTF. The Extracellular segment spans residues 261 to 277; it reads QEFFGLNNCSSSNRLDQ. The helical transmembrane segment at 278–301 threads the bilayer; it reads AMQVTETLGMTHCCINPIIYAFVG. At 302–352 the chain is on the cytoplasmic side; sequence EKFRNYLLVFFQKHIAKRFCKCCSIFQQEASERASSVYTRSTGEQEISVGL. Residues C321, C323, and C324 are each lipidated (S-palmitoyl cysteine). Phosphoserine; by BARK1 occurs at positions 336, 337, 342, and 349.

The protein belongs to the G-protein coupled receptor 1 family. As to quaternary structure, interacts with PRAF2. Efficient ligand binding to CCL3/MIP-1alpha and CCL4/MIP-1beta requires sulfation, O-glycosylation and sialic acid modifications. Glycosylation on Ser-6 is required for efficient binding of CCL4. Interacts with GRK2. Interacts with ARRB1 and ARRB2. Interacts with CNIH4. Interacts with S100A4; this interaction stimulates T-lymphocyte chemotaxis. Sulfated on at least 2 of the N-terminal tyrosines. Sulfation is required for efficient binding of the chemokines, CCL3 and CCL4. In terms of processing, palmitoylation in the C-terminal is important for cell surface expression. Post-translationally, phosphorylation on serine residues in the C-terminal is stimulated by binding CC chemokines especially by APO-RANTES. O-glycosylated, but not N-glycosylated. Ser-6 appears to be the major site even if Ser-7 may be also O-glycosylated. Also sialylated glycans present which contribute to chemokine binding. Thr-16 and Ser-17 may also be glycosylated and, if so, with small moieties such as a T-antigen.

The protein resides in the cell membrane. In terms of biological role, receptor for a number of inflammatory CC-chemokines including CCL3/MIP-1-alpha, CCL4/MIP-1-beta and RANTES and subsequently transduces a signal by increasing the intracellular calcium ion level. May play a role in the control of granulocytic lineage proliferation or differentiation. Participates in T-lymphocyte migration to the infection site by acting as a chemotactic receptor. In Cercocebus galeritus (Tana river mangabey), this protein is C-C chemokine receptor type 5 (CCR5).